The primary structure comprises 502 residues: Glutamate--tRNA ligase (502 aa).

The short motif at Pro9 to Thr19 is the 'HIGH' region element. A 'KMSKS' region motif is present at residues Lys250–Arg254. Lys253 lines the ATP pocket.

This sequence belongs to the class-I aminoacyl-tRNA synthetase family. Glutamate--tRNA ligase type 1 subfamily. In terms of assembly, monomer.

It localises to the cytoplasm. The catalysed reaction is tRNA(Glu) + L-glutamate + ATP = L-glutamyl-tRNA(Glu) + AMP + diphosphate. In terms of biological role, catalyzes the attachment of glutamate to tRNA(Glu) in a two-step reaction: glutamate is first activated by ATP to form Glu-AMP and then transferred to the acceptor end of tRNA(Glu). The chain is Glutamate--tRNA ligase from Acinetobacter baumannii (strain SDF).